The primary structure comprises 132 residues: Sec-independent protein translocase protein TatB (132 aa).

A helical membrane pass occupies residues 1 to 21 (MFDIGFWELVLISVVGLVVLG). The interval 70–132 (GMEDLSPELK…KVSAADKKAE (63 aa)) is disordered. 2 stretches are compositionally biased toward basic and acidic residues: residues 96 to 108 (YADKAQSETETAK) and 115 to 132 (SAEKVEEIKVSAADKKAE).

Belongs to the TatB family. As to quaternary structure, the Tat system comprises two distinct complexes: a TatABC complex, containing multiple copies of TatA, TatB and TatC subunits, and a separate TatA complex, containing only TatA subunits. Substrates initially bind to the TatABC complex, which probably triggers association of the separate TatA complex to form the active translocon.

The protein resides in the cell inner membrane. Functionally, part of the twin-arginine translocation (Tat) system that transports large folded proteins containing a characteristic twin-arginine motif in their signal peptide across membranes. Together with TatC, TatB is part of a receptor directly interacting with Tat signal peptides. TatB may form an oligomeric binding site that transiently accommodates folded Tat precursor proteins before their translocation. In Vibrio parahaemolyticus serotype O3:K6 (strain RIMD 2210633), this protein is Sec-independent protein translocase protein TatB.